An 86-amino-acid chain; its full sequence is Small ribosomal subunit protein eS27 (86 aa).

Residues 39 to 61 form a C4-type zinc finger; the sequence is CQGCFNITTVFSHSQTVVVCPGC.

It belongs to the eukaryotic ribosomal protein eS27 family. Zn(2+) serves as cofactor.

This is Small ribosomal subunit protein eS27 (RPS27) from Hordeum vulgare (Barley).